Here is a 394-residue protein sequence, read N- to C-terminus: S-adenosylmethionine synthase (394 aa).

Residue histidine 16 coordinates ATP. Aspartate 18 serves as a coordination point for Mg(2+). Glutamate 44 is a K(+) binding site. 2 residues coordinate L-methionine: glutamate 57 and glutamine 99. Positions 99–109 (QSPDIAQGVDE) are flexible loop. Residues 173-175 (DAK), 240-241 (RF), aspartate 249, 255-256 (RK), alanine 272, and lysine 276 contribute to the ATP site. Aspartate 249 contacts L-methionine. An L-methionine-binding site is contributed by lysine 280.

This sequence belongs to the AdoMet synthase family. As to quaternary structure, homotetramer; dimer of dimers. The cofactor is Mg(2+). K(+) is required as a cofactor.

Its subcellular location is the cytoplasm. The catalysed reaction is L-methionine + ATP + H2O = S-adenosyl-L-methionine + phosphate + diphosphate. The protein operates within amino-acid biosynthesis; S-adenosyl-L-methionine biosynthesis; S-adenosyl-L-methionine from L-methionine: step 1/1. In terms of biological role, catalyzes the formation of S-adenosylmethionine (AdoMet) from methionine and ATP. The overall synthetic reaction is composed of two sequential steps, AdoMet formation and the subsequent tripolyphosphate hydrolysis which occurs prior to release of AdoMet from the enzyme. The polypeptide is S-adenosylmethionine synthase (Lacticaseibacillus paracasei (strain ATCC 334 / BCRC 17002 / CCUG 31169 / CIP 107868 / KCTC 3260 / NRRL B-441) (Lactobacillus paracasei)).